A 1086-amino-acid chain; its full sequence is Tyrosine-protein kinase receptor svh-2 (1086 aa).

A signal peptide spans 1 to 34 (MVLGSSQSSAKELTTQSSIFRFLVLLLCFTSATG). Over 35–651 (GQINGKLLNG…DKKGSSPGWK (617 aa)) the chain is Extracellular. 5 N-linked (GlcNAc...) asparagine glycosylation sites follow: Asn-276, Asn-299, Asn-461, Asn-554, and Asn-617. The chain crosses the membrane as a helical span at residues 652-672 (IAIAIISVMTIILIVAIIVYY). The Cytoplasmic segment spans residues 673–1086 (MRNRFPRIKT…LLSECSETSV (414 aa)). Residues 735–996 (VDKLDPIGQG…SDLVTIIPNV (262 aa)) form the Protein kinase domain. Residues 741 to 749 (IGQGHYGVV) and Lys-767 contribute to the ATP site. Catalysis depends on Asp-858, which acts as the Proton acceptor. Phosphotyrosine is present on Tyr-890. Residues 1056 to 1086 (AELPSDSPSTSTAIPQSTPYQLLSECSETSV) form a disordered region. Over residues 1061-1086 (DSPSTSTAIPQSTPYQLLSECSETSV) the composition is skewed to polar residues.

The protein belongs to the protein kinase superfamily. Tyr protein kinase family. As to quaternary structure, interacts (via cytoplasmic domain) with mlk-1. Interacts with shc-1 (via SH2 domain). May interact (when tyrosine-phosphorylated) with tns-1 (via SH2 domain). May be autophosphorylated on Tyr-890 following dimerization. Expressed in body wall and vulva muscles, pharynx, intestine, excretory canals, distal tip cells and some neurons. Expressed in D-type motor neurons upon axon injury.

The protein localises to the cell membrane. It catalyses the reaction L-tyrosyl-[protein] + ATP = O-phospho-L-tyrosyl-[protein] + ADP + H(+). Receptor tyrosine kinase which may phosphorylate mlk-1, a component of the mlk-1, mek-1 and kgb-1 pathway. Involved in axon regeneration after injury by promoting the generation of productive and stable growth cones. The protein is Tyrosine-protein kinase receptor svh-2 of Caenorhabditis elegans.